The primary structure comprises 292 residues: ATP synthase gamma chain (292 aa).

It belongs to the ATPase gamma chain family. As to quaternary structure, F-type ATPases have 2 components, CF(1) - the catalytic core - and CF(0) - the membrane proton channel. CF(1) has five subunits: alpha(3), beta(3), gamma(1), delta(1), epsilon(1). CF(0) has three main subunits: a, b and c.

The protein resides in the cell membrane. Functionally, produces ATP from ADP in the presence of a proton gradient across the membrane. The gamma chain is believed to be important in regulating ATPase activity and the flow of protons through the CF(0) complex. The protein is ATP synthase gamma chain of Streptococcus mutans serotype c (strain ATCC 700610 / UA159).